The following is a 130-amino-acid chain: Small ribosomal subunit protein uS8 (130 aa).

This sequence belongs to the universal ribosomal protein uS8 family. In terms of assembly, part of the 30S ribosomal subunit. Contacts proteins S5 and S12.

Functionally, one of the primary rRNA binding proteins, it binds directly to 16S rRNA central domain where it helps coordinate assembly of the platform of the 30S subunit. This is Small ribosomal subunit protein uS8 from Shewanella frigidimarina (strain NCIMB 400).